Here is a 141-residue protein sequence, read N- to C-terminus: HTH-type transcriptional repressor NsrR (141 aa).

The region spanning 2-129 is the HTH rrf2-type domain; it reads QLTSFTDYAL…DDCSIAELLD (128 aa). Residues 28-51 constitute a DNA-binding region (H-T-H motif); that stretch reads ITDVTELFGVSRNHMVKVINRLGQ. [2Fe-2S] cluster-binding residues include cysteine 91, cysteine 96, and cysteine 102.

The cofactor is [2Fe-2S] cluster.

Its function is as follows. Nitric oxide-sensitive repressor of genes involved in protecting the cell against nitrosative stress. May require iron for activity. The chain is HTH-type transcriptional repressor NsrR from Vibrio vulnificus (strain CMCP6).